The chain runs to 460 residues: Bifunctional protein GlmU (460 aa).

Positions 1–228 are pyrophosphorylase; sequence MKNYALVLAA…NSLAMGVNDL (228 aa). UDP-N-acetyl-alpha-D-glucosamine is bound by residues 8–11, Lys22, Gln72, and 77–78; these read LAAG and GT. Asp102 lines the Mg(2+) pocket. UDP-N-acetyl-alpha-D-glucosamine is bound by residues Gly139, Glu154, Asn169, and Asn226. Asn226 contacts Mg(2+). The segment at 229–249 is linker; the sequence is YAISKAEKYLREYINKDHMLN. The N-acetyltransferase stretch occupies residues 250–460; that stretch reads GVSMINPETI…LISPKPKKEE (211 aa). Positions 331 and 349 each coordinate UDP-N-acetyl-alpha-D-glucosamine. The active-site Proton acceptor is the His361. Tyr364 and Asn375 together coordinate UDP-N-acetyl-alpha-D-glucosamine. Residues 384–385, Ala421, and Arg438 contribute to the acetyl-CoA site; that span reads NY.

In the N-terminal section; belongs to the N-acetylglucosamine-1-phosphate uridyltransferase family. This sequence in the C-terminal section; belongs to the transferase hexapeptide repeat family. As to quaternary structure, homotrimer. The cofactor is Mg(2+).

Its subcellular location is the cytoplasm. It carries out the reaction alpha-D-glucosamine 1-phosphate + acetyl-CoA = N-acetyl-alpha-D-glucosamine 1-phosphate + CoA + H(+). The catalysed reaction is N-acetyl-alpha-D-glucosamine 1-phosphate + UTP + H(+) = UDP-N-acetyl-alpha-D-glucosamine + diphosphate. Its pathway is nucleotide-sugar biosynthesis; UDP-N-acetyl-alpha-D-glucosamine biosynthesis; N-acetyl-alpha-D-glucosamine 1-phosphate from alpha-D-glucosamine 6-phosphate (route II): step 2/2. The protein operates within nucleotide-sugar biosynthesis; UDP-N-acetyl-alpha-D-glucosamine biosynthesis; UDP-N-acetyl-alpha-D-glucosamine from N-acetyl-alpha-D-glucosamine 1-phosphate: step 1/1. It functions in the pathway bacterial outer membrane biogenesis; LPS lipid A biosynthesis. Catalyzes the last two sequential reactions in the de novo biosynthetic pathway for UDP-N-acetylglucosamine (UDP-GlcNAc). The C-terminal domain catalyzes the transfer of acetyl group from acetyl coenzyme A to glucosamine-1-phosphate (GlcN-1-P) to produce N-acetylglucosamine-1-phosphate (GlcNAc-1-P), which is converted into UDP-GlcNAc by the transfer of uridine 5-monophosphate (from uridine 5-triphosphate), a reaction catalyzed by the N-terminal domain. The chain is Bifunctional protein GlmU from Acholeplasma laidlawii (strain PG-8A).